The sequence spans 496 residues: Ankyrin repeat domain-containing protein 34A (496 aa).

ANK repeat units follow at residues 4-33 (TEGHALLRAVGQGKLRLARLLLEGGAYVNE), 37-72 (QGETALMAACRARYDDPQNKARMVRYLLEQGADPNI), 76-106 (LGRTALMHACAGGGGAAVASLLLAHGADPSV), and 110-139 (AGASALVHALDRGDRETLATLLDACKAKGT). Gln-15 is subject to N5-methylglutamine. 2 stretches are compositionally biased toward polar residues: residues 147–162 (DTSPSGTKKTRQYLNS) and 180–191 (FCTSPSEIQLQT). A disordered region spans residues 147–473 (DTSPSGTKKT…TKRKLVRRHS (327 aa)). The segment covering 204–214 (AQEEEEKRDVF) has biased composition (basic and acidic residues). A compositionally biased stretch (pro residues) spans 218-233 (LPKPPDDPSPSEPLPK). Over residues 234–243 (PPRHPPKPLK) the composition is skewed to basic residues. Thr-316 is subject to Phosphothreonine. Basic residues predominate over residues 463 to 473 (RTKRKLVRRHS).

The protein belongs to the ANKRD34 family. In terms of processing, methylated at Gln-15 by N6AMT1.

The protein is Ankyrin repeat domain-containing protein 34A (ANKRD34A) of Homo sapiens (Human).